We begin with the raw amino-acid sequence, 237 residues long: Small ribosomal subunit protein eS4 (237 aa).

The 63-residue stretch at 37–99 (VPLLIVLRDV…REEYYRIFPD (63 aa)) folds into the S4 RNA-binding domain.

This sequence belongs to the eukaryotic ribosomal protein eS4 family.

In Natronomonas pharaonis (strain ATCC 35678 / DSM 2160 / CIP 103997 / JCM 8858 / NBRC 14720 / NCIMB 2260 / Gabara) (Halobacterium pharaonis), this protein is Small ribosomal subunit protein eS4.